We begin with the raw amino-acid sequence, 695 residues long: Pre-mRNA-splicing factor clf-1 (695 aa).

HAT repeat units lie at residues 52–84 (EYQGRKRKEFEDYVRRNRVRLSNWLQYAQWELE), 86–118 (KEFARARSVFERALDVHPNNTQLWIRYVQAEIK), 120–152 (RNINHARNLLDRAVTRLPRVTSLWYQYLYVMEM), 154–185 (GDIPGTRQVFDRWMKWQPDEQAWSAYIRLEKR), 187–218 (GEFDRAREIFRAFTAVHPEPRTWLKWAKFEEE), 220–259 (GTSDTVREVFQTAIQTIAETLGDDAVDERIFIAFARYEAR), 261–295 (REYERARAIYKFGLDNLPRSKSMTLHAHYTTFEKQ), 305–337 (VILTKRRRLYEEQVKENAKNYDVWFDFARLEES), 339–373 (GDVDRTREVYERAIAQVPPTQEKRHWRRYIFLFLF), 383–419 (KDIGRARQIYDTCLNLIPHKKFTFAKVWVAKAHFEIR), 421–452 (GQLTTARKTLGRAIGMCPKDKIFKEYILLEQK), 454–486 (YEFERCRTLYEKHVMYNPANCQTWIKWAELERG), 488–522 (DDLERTRAIFELAVSQPILDMPEVVWKAYIDFEEE), 524–555 (GEYERTRALYERLLEKADHPKVWISYAQFEIN), 578–616 (EAKARARKIFERAHKSMKERELKAERVSLLNAWLAFEKT), and 621–654 (EDIEKIQKQMPRKTKKKRKLEDDTWEEYVDYIFP).

The protein belongs to the crooked-neck family. Associated with the spliceosome.

The protein resides in the nucleus. Involved in pre-mRNA splicing and cell cycle progression. Required for the spliceosome assembly and initiation of the DNA replication. In Neurospora crassa (strain ATCC 24698 / 74-OR23-1A / CBS 708.71 / DSM 1257 / FGSC 987), this protein is Pre-mRNA-splicing factor clf-1 (clf-1).